The sequence spans 186 residues: dCTP deaminase (186 aa).

Position 107-112 (107-112 (KSTYAR)) interacts with dCTP. E133 acts as the Proton donor/acceptor in catalysis. DCTP is bound by residues Q152, Y166, and Q176.

Belongs to the dCTP deaminase family. As to quaternary structure, homotrimer.

It catalyses the reaction dCTP + H2O + H(+) = dUTP + NH4(+). The protein operates within pyrimidine metabolism; dUMP biosynthesis; dUMP from dCTP (dUTP route): step 1/2. Functionally, catalyzes the deamination of dCTP to dUTP. The sequence is that of dCTP deaminase from Campylobacter curvus (strain 525.92).